A 371-amino-acid polypeptide reads, in one-letter code: S-adenosylmethionine:tRNA ribosyltransferase-isomerase (371 aa).

It belongs to the QueA family. As to quaternary structure, monomer.

The protein resides in the cytoplasm. It catalyses the reaction 7-aminomethyl-7-carbaguanosine(34) in tRNA + S-adenosyl-L-methionine = epoxyqueuosine(34) in tRNA + adenine + L-methionine + 2 H(+). It participates in tRNA modification; tRNA-queuosine biosynthesis. Its function is as follows. Transfers and isomerizes the ribose moiety from AdoMet to the 7-aminomethyl group of 7-deazaguanine (preQ1-tRNA) to give epoxyqueuosine (oQ-tRNA). The protein is S-adenosylmethionine:tRNA ribosyltransferase-isomerase of Prochlorococcus marinus (strain MIT 9303).